The chain runs to 677 residues: Pannexin-2 (677 aa).

Over 11–53 (MATALLAGEKLRELILPGSQDDKAGALAALLLQLKLELPFDRV) the chain is Cytoplasmic. Residues 54 to 74 (VTIGTVLVPILLVTLVFTKNF) traverse the membrane as a helical segment. Over 75–125 (AEEPIYCYTPHNFTRDQALYARGYCWTELRDALPGVDASLWPSLFEHKFLP) the chain is Extracellular. N86 carries an N-linked (GlcNAc...) asparagine glycan. The helical transmembrane segment at 126–146 (YALLAFAAIMYVPALGWEFLA) threads the bilayer. Topologically, residues 147-230 (STRLTSELNF…NFLAKLYLAR (84 aa)) are cytoplasmic. A helical membrane pass occupies residues 231–251 (HVLILLLSVVPISYLCTYYAT). Topologically, residues 252–295 (QKQNEFTCALGASPDGPVGSAGPTVRVSCKLPSVQLQRIIAGVD) are extracellular. Residues 296-316 (IVLLCFMNLIILVNLIHLFIF) form a helical membrane-spanning segment. At 317 to 617 (RKSNFIFDKL…LGKADPLTIL (301 aa)) the chain is on the cytoplasmic side. The segment covering 394–408 (TTPTVRDSGIQTVDP) has biased composition (polar residues). 2 disordered regions span residues 394–425 (TTPT…PVVK) and 485–512 (AHHY…HTRH). Phosphoserine occurs at positions 593 and 604.

It belongs to the pannexin family. Homoheptameric. Post-translationally, S-palmitoylated in neural stem and progenitor cells. In terms of processing, cleaved by CASP3 and CASP7 during apoptosis. Cleavage has no effect on it function. As to expression, expression is enriched in central nervous system. Expressed in suprabasal layers of skin epidermis. In terms of tissue distribution, more aboundantly expressed in skin.

The protein localises to the cell membrane. It localises to the golgi apparatus membrane. Its subcellular location is the endoplasmic reticulum membrane. It catalyses the reaction ATP(in) = ATP(out). It carries out the reaction chloride(in) = chloride(out). The enzyme catalyses iodide(out) = iodide(in). The catalysed reaction is Na(+)(in) = Na(+)(out). It catalyses the reaction D-gluconate(in) = D-gluconate(out). Its function is as follows. Ion channel with a slight anion preference. Also able to release ATP. Plays a role in regulating neurogenesis and apoptosis in keratinocytes. This chain is Pannexin-2 (Panx2), found in Mus musculus (Mouse).